The chain runs to 268 residues: Tryptophan synthase alpha chain (268 aa).

Catalysis depends on proton acceptor residues glutamate 49 and aspartate 60.

This sequence belongs to the TrpA family. Tetramer of two alpha and two beta chains.

The enzyme catalyses (1S,2R)-1-C-(indol-3-yl)glycerol 3-phosphate + L-serine = D-glyceraldehyde 3-phosphate + L-tryptophan + H2O. Its pathway is amino-acid biosynthesis; L-tryptophan biosynthesis; L-tryptophan from chorismate: step 5/5. In terms of biological role, the alpha subunit is responsible for the aldol cleavage of indoleglycerol phosphate to indole and glyceraldehyde 3-phosphate. In Pseudomonas paraeruginosa (strain DSM 24068 / PA7) (Pseudomonas aeruginosa (strain PA7)), this protein is Tryptophan synthase alpha chain.